The primary structure comprises 131 residues: SPbeta prophage-derived UPF0715 membrane protein YopD (131 aa).

4 consecutive transmembrane segments (helical) span residues 12–32 (VYTL…YLFV), 38–58 (AIAL…YLVF), 75–95 (LINF…FWFV), and 108–128 (FEYY…DSIF).

The protein belongs to the UPF0715 family.

It is found in the cell membrane. The protein is SPbeta prophage-derived UPF0715 membrane protein YopD (yopD) of Bacillus subtilis (strain 168).